We begin with the raw amino-acid sequence, 470 residues long: Aspartyl aminopeptidase (470 aa).

H92 is a Zn(2+) binding site. H166 lines the substrate pocket. A Zn(2+)-binding site is contributed by D263. Position 299 (E299) interacts with substrate. The Zn(2+) site is built by E300 and D343. Substrate is bound by residues D343, H346, K371, and Y378. H437 is a Zn(2+) binding site.

This sequence belongs to the peptidase M18 family. Tetrahedron-shaped homododecamer built from six homodimers. Requires Zn(2+) as cofactor. Expressed in various cell types and tissues including the pharynx, neurons, body wall muscle, intestine and vulva.

Its subcellular location is the cytoplasm. The protein resides in the cytosol. It catalyses the reaction Release of an N-terminal aspartate or glutamate from a peptide, with a preference for aspartate.. Its function is as follows. Aminopeptidase with specificity towards an acidic amino acid at the N-terminus. Plays a role in membrane trafficking and is specifically involved in the recycling and degradation of endocytic cargo. The polypeptide is Aspartyl aminopeptidase (Caenorhabditis elegans).